The sequence spans 147 residues: Ponticulin-like protein C1 (147 aa).

An N-terminal signal peptide occupies residues 1–20; it reads MKFTKSLLLLIVAVFASSNA. The GPI-like-anchor amidated asparagine moiety is linked to residue asparagine 118. N-linked (GlcNAc...) asparagine glycosylation is present at asparagine 118. Positions 119–147 are cleaved as a propeptide — removed in mature form; sequence SSESDSSDSTRIGASFALAASVLLSMLAI.

Belongs to the ponticulin family. The GPI-like-anchor contains a phosphoceramide group, rather than a phosphatidyl group.

It localises to the cell membrane. The polypeptide is Ponticulin-like protein C1 (ponC1) (Dictyostelium discoideum (Social amoeba)).